Consider the following 413-residue polypeptide: NAD(P)H oxidoreductase RTN4IP1, mitochondrial (413 aa).

Residues 1–23 (MTAAGFNSILCLRQLVRLNRRQY) constitute a mitochondrion transit peptide. A disordered region spans residues 27 to 52 (AKSVLSGSQTNDQATPPPTSKSADKM). Over residues 31-40 (LSGSQTNDQA) the composition is skewed to polar residues. The region spanning 61 to 405 (GDIDELQLSE…SGHLRGKIVV (345 aa)) is the Enoyl reductase (ER) domain. 9 residues coordinate NADPH: Ser-228, Gly-230, Val-231, Ser-251, Tyr-269, Gly-353, Phe-355, His-398, and Arg-400.

Belongs to the zinc-containing alcohol dehydrogenase family. Quinone oxidoreductase subfamily.

The protein localises to the mitochondrion matrix. The catalysed reaction is a quinone + NADH + H(+) = a quinol + NAD(+). It carries out the reaction a quinone + NADPH + H(+) = a quinol + NADP(+). The protein operates within cofactor biosynthesis; ubiquinone biosynthesis. NAD(P)H oxidoreductase. Involved in the ubiquinone biosynthetic pathway. The protein is NAD(P)H oxidoreductase RTN4IP1, mitochondrial of Drosophila melanogaster (Fruit fly).